The sequence spans 280 residues: Inhibitor of growth protein 2 (280 aa).

A coiled-coil region spans residues 48 to 120; it reads VLRELDNKYQ…VENRARQMEL (73 aa). Residues 122–204 form a disordered region; it reads SQCFQDPAES…KQEREASPVE (83 aa). A compositionally biased stretch (basic and acidic residues) spans 130 to 140; that stretch reads ESERASDKAKM. Residues 181–193 show a composition bias toward basic residues; sequence KKSKSAKKKKRSK. Residue K195 forms a Glycyl lysine isopeptide (Lys-Gly) (interchain with G-Cter in SUMO1) linkage. The PHD-type zinc-finger motif lies at 212–261; that stretch reads PTYCLCNQVSYGEMIGCDNEQCPIEWFHFSCVSLTYKPKGKWYCPKCRGD. Positions 215, 217, 228, 233, 239, 242, 255, and 258 each coordinate Zn(2+). Residues 258 to 274 are compositionally biased toward basic and acidic residues; the sequence is CRGDNEKTMDKSTEKTK. The tract at residues 258–280 is disordered; the sequence is CRGDNEKTMDKSTEKTKKDRRSR. Residues 264–280 are PBR; the sequence is KTMDKSTEKTKKDRRSR.

It belongs to the ING family. In terms of assembly, interacts with H3K4me3 and to a lesser extent with H3K4me2. Component of a mSin3A-like complex at least consisting of SIN3A, HDAC1, HDAC2, RBBP4/RbAp48, RBBP7/RbAp46, SAP30 and ING2. Post-translationally, sumoylation enhances its association with SIN3A and is required for binding to some target gene promoters, this is the case for TMEM71. As to expression, widely expressed. Higher expressed in colon-cancer tumor than in normal colon tissues.

Its subcellular location is the nucleus. Seems to be involved in p53/TP53 activation and p53/TP53-dependent apoptotic pathways, probably by enhancing acetylation of p53/TP53. Component of a mSin3A-like corepressor complex, which is probably involved in deacetylation of nucleosomal histones. ING2 activity seems to be modulated by binding to phosphoinositides (PtdInsPs). In Homo sapiens (Human), this protein is Inhibitor of growth protein 2 (ING2).